Reading from the N-terminus, the 334-residue chain is MEEPMEVDNKRPKVLTWTEKYRPKTLDDIAYQDEVVTMLKGALQGRDLPHLLFYGPPGTGKTSAALAFCRQLFPKNIFHDRVLDLNASDERGIAVVRQKIQSFSKSSLGHSHREDVLKLKIIILDEVDAMTREAQAAMRRVIEDFSKTTRFILICNYVSRLIPPVVSRCAKFRFKSLPAEIQVQRLRTICDAEGTPMSDDELKQVMEYSEGDLRRAVCTLQSLAPILKSGDDNARNCYLRGSSDSLLISNVCKSILTADVPQIIALTKDITKSCTGVAFIRRCFQQLMDEDVINDENIGVMGKLVATCEKRILDGCDLENNLLDFLLTLRETIQ.

55–62 is a binding site for ATP; sequence GPPGTGKT.

This sequence belongs to the activator 1 small subunits family. As to quaternary structure, heteropentamer of various rfc subunits that forms a complex (RFC) with PCNA in the presence of ATP.

Its subcellular location is the nucleus. Functionally, the elongation of primed DNA templates by DNA polymerase delta and epsilon requires the action of the accessory proteins PCNA and activator 1. This subunit may be involved in the elongation of the multiprimed DNA template. In Caenorhabditis elegans, this protein is Replication factor C subunit 4 (rfc-4).